The following is a 559-amino-acid chain: Formate--tetrahydrofolate ligase (559 aa).

68 to 75 (TPAGEGKT) contacts ATP.

It belongs to the formate--tetrahydrofolate ligase family.

It catalyses the reaction (6S)-5,6,7,8-tetrahydrofolate + formate + ATP = (6R)-10-formyltetrahydrofolate + ADP + phosphate. The protein operates within one-carbon metabolism; tetrahydrofolate interconversion. This is Formate--tetrahydrofolate ligase from Sinorhizobium fredii (strain NBRC 101917 / NGR234).